Here is a 151-residue protein sequence, read N- to C-terminus: UPF0208 membrane protein ECA3038 (151 aa).

2 consecutive transmembrane segments (helical) span residues 46–66 (FGIRIMPPLAVFTLTWQIALG) and 69–89 (LGPAIATALFACSLPLQGLWW).

The protein belongs to the UPF0208 family.

It is found in the cell inner membrane. This Pectobacterium atrosepticum (strain SCRI 1043 / ATCC BAA-672) (Erwinia carotovora subsp. atroseptica) protein is UPF0208 membrane protein ECA3038.